Consider the following 511-residue polypeptide: Glutamate/gamma-aminobutyrate antiporter (511 aa).

Topologically, residues 1 to 13 (MATSVQTGKAKQL) are cytoplasmic. A helical membrane pass occupies residues 14-36 (TLLGFFAITASMVMAVYEYPTFA). The Periplasmic segment spans residues 37 to 40 (TSGF). A helical membrane pass occupies residues 41-64 (SLVFFLLLGGILWFIPVGLCAAEM). At 65-85 (ATVDGWEEGGVFAWVSNTLGP) the chain is on the cytoplasmic side. Residues 86–112 (RWGFAAISFGYLQIAIGFIPMLYFVLG) form a helical membrane-spanning segment. The Periplasmic segment spans residues 113–126 (ALSYILKWPALNED). A helical membrane pass occupies residues 127 to 147 (PITKTIAALIILWALALTQFG). Topologically, residues 148 to 151 (GTKY) are cytoplasmic. Residues 152 to 180 (TARIAKVGFFAGILLPAFILIALAAIYLH) form a helical membrane-spanning segment. The Periplasmic portion of the chain corresponds to 181 to 201 (SGAPVAIEMDSKTFFPDFSKV). The chain crosses the membrane as a helical span at residues 202 to 225 (GTLVVFVAFILSYMGVEASATHVN). Over 226–229 (EMSN) the chain is Cytoplasmic. A helical transmembrane segment spans residues 230–259 (PGRDYPLAMLLLMVAAICLSSVGGLSIAMV). The Periplasmic segment spans residues 260-288 (IPGNEINLSAGVMQTFTVLMSHVAPEIEW). The helical transmembrane segment at 289 to 322 (TVRVISALLLLGVLAEIASWIVGPSRGMYVTAQK) threads the bilayer. The Cytoplasmic portion of the chain corresponds to 323-337 (NLLPAAFAKMNKNGV). A helical membrane pass occupies residues 338–359 (PVTLVISQLVITSIALIILTNT). Residues 360 to 362 (GGG) lie on the Periplasmic side of the membrane. The helical transmembrane segment at 363 to 396 (NNMSFLIALALTVVIYLCAYFMLFIGYIVLVLKH) threads the bilayer. Residues 397 to 409 (PDLKRTFNIPGGK) lie on the Cytoplasmic side of the membrane. The chain crosses the membrane as a helical span at residues 410 to 430 (GVKLVVAIVGLLTSIMAFIVS). The Periplasmic segment spans residues 431–443 (FLPPDNIQGDSTD). A helical membrane pass occupies residues 444 to 467 (MYVELLVVSFLVVLALPFILYAVH). At 468–511 (DRKGKANTGVTLEPINSQNAPKGHFFLHPRARSPHYIVMNDKKH) the chain is on the cytoplasmic side.

This sequence belongs to the amino acid-polyamine-organocation (APC) superfamily. Glutamate:GABA antiporter (GGA) (TC 2.A.3.7) family. In terms of assembly, monomer.

It localises to the cell inner membrane. The enzyme catalyses 4-aminobutanoate(in) + L-glutamate(out) = 4-aminobutanoate(out) + L-glutamate(in). Its activity is regulated as follows. Shows pH-dependent activity. The Glu/GABA transport activity is robust at pH 4.5 and rapidly decreases with increasing pH, with no detectable activity at pH 6.5 or above. The Glu analog L-trans-pyrrolidine-2,4-dicarboxylic acid (L-PDC) blocks the uptake of glutamate by selective inhibition. Functionally, involved in glutaminase-dependent acid resistance. Exchanges extracellular glutamate (Glu) for intracellular gamma-aminobutyric acid (GABA) under acidic conditions. The protonation states of substrates are crucial for transport. Selectively transports Glu with no net charge and GABA with a positive charge. Also efficiently transports glutamine and, to a smaller extent, methionine and leucine. When the extracellular pH drops below 2.5, can import L-glutamine and export either glutamate or GABA. The ability to survive the extremely acidic conditions of the stomach is essential for successful colonization of the host by commensal and pathogenic bacteria. The polypeptide is Glutamate/gamma-aminobutyrate antiporter (Escherichia coli (strain K12)).